The following is a 304-amino-acid chain: Ribosomal RNA small subunit methyltransferase H (304 aa).

Residues 37 to 39 (GGH), Asp57, Phe85, Asp100, and His107 each bind S-adenosyl-L-methionine.

Belongs to the methyltransferase superfamily. RsmH family.

The protein resides in the cytoplasm. The enzyme catalyses cytidine(1402) in 16S rRNA + S-adenosyl-L-methionine = N(4)-methylcytidine(1402) in 16S rRNA + S-adenosyl-L-homocysteine + H(+). In terms of biological role, specifically methylates the N4 position of cytidine in position 1402 (C1402) of 16S rRNA. In Azobacteroides pseudotrichonymphae genomovar. CFP2, this protein is Ribosomal RNA small subunit methyltransferase H.